A 237-amino-acid chain; its full sequence is D-aminoacyl-tRNA deacylase (237 aa).

Belongs to the DtdA deacylase family. In terms of assembly, monomer. Zn(2+) is required as a cofactor.

It carries out the reaction a D-aminoacyl-tRNA + H2O = a tRNA + a D-alpha-amino acid + H(+). The enzyme catalyses glycyl-tRNA(Ala) + H2O = tRNA(Ala) + glycine + H(+). Its function is as follows. D-aminoacyl-tRNA deacylase with broad substrate specificity. By recycling D-aminoacyl-tRNA to D-amino acids and free tRNA molecules, this enzyme counteracts the toxicity associated with the formation of D-aminoacyl-tRNA entities in vivo. This Saccharolobus islandicus (strain Y.N.15.51 / Yellowstone #2) (Sulfolobus islandicus) protein is D-aminoacyl-tRNA deacylase.